The primary structure comprises 476 residues: ATP synthase subunit beta (476 aa).

152–159 is a binding site for ATP; that stretch reads GGAGVGKT.

This sequence belongs to the ATPase alpha/beta chains family. As to quaternary structure, F-type ATPases have 2 components, CF(1) - the catalytic core - and CF(0) - the membrane proton channel. CF(1) has five subunits: alpha(3), beta(3), gamma(1), delta(1), epsilon(1). CF(0) has three main subunits: a(1), b(2) and c(9-12). The alpha and beta chains form an alternating ring which encloses part of the gamma chain. CF(1) is attached to CF(0) by a central stalk formed by the gamma and epsilon chains, while a peripheral stalk is formed by the delta and b chains.

It is found in the cell inner membrane. It carries out the reaction ATP + H2O + 4 H(+)(in) = ADP + phosphate + 5 H(+)(out). Its function is as follows. Produces ATP from ADP in the presence of a proton gradient across the membrane. The catalytic sites are hosted primarily by the beta subunits. The sequence is that of ATP synthase subunit beta from Acidiphilium cryptum (strain JF-5).